The sequence spans 81 residues: Large ribosomal subunit protein bL31B (81 aa).

It belongs to the bacterial ribosomal protein bL31 family. Type B subfamily. As to quaternary structure, part of the 50S ribosomal subunit.

The polypeptide is Large ribosomal subunit protein bL31B (Lactobacillus helveticus (strain DPC 4571)).